Reading from the N-terminus, the 201-residue chain is Dephospho-CoA kinase (201 aa).

Residues 3 to 201 (IIGLTGGMAA…ALLHRLREAS (199 aa)) enclose the DPCK domain. 11 to 16 (AAGKST) contacts ATP.

The protein belongs to the CoaE family.

It localises to the cytoplasm. It carries out the reaction 3'-dephospho-CoA + ATP = ADP + CoA + H(+). It participates in cofactor biosynthesis; coenzyme A biosynthesis; CoA from (R)-pantothenate: step 5/5. Catalyzes the phosphorylation of the 3'-hydroxyl group of dephosphocoenzyme A to form coenzyme A. This chain is Dephospho-CoA kinase, found in Gluconobacter oxydans (strain 621H) (Gluconobacter suboxydans).